Reading from the N-terminus, the 125-residue chain is Large ribosomal subunit protein bL12 (125 aa).

Belongs to the bacterial ribosomal protein bL12 family. Homodimer. Part of the ribosomal stalk of the 50S ribosomal subunit. Forms a multimeric L10(L12)X complex, where L10 forms an elongated spine to which 2 to 4 L12 dimers bind in a sequential fashion. Binds GTP-bound translation factors.

Its function is as follows. Forms part of the ribosomal stalk which helps the ribosome interact with GTP-bound translation factors. Is thus essential for accurate translation. This is Large ribosomal subunit protein bL12 from Cereibacter sphaeroides (Rhodobacter sphaeroides).